A 432-amino-acid polypeptide reads, in one-letter code: Keratin, type I cytoskeletal 17 (432 aa).

A disordered region spans residues 1–24 (MTTSIRQFTSSSSIKGSSGLGGGS). Positions 1–83 (MTTSIRQFTS…GGVDGLLAGG (83 aa)) are head. Serine 12 and serine 13 each carry phosphoserine. Lysine 15 participates in a covalent cross-link: Glycyl lysine isopeptide (Lys-Gly) (interchain with G-Cter in SUMO1); alternate. A Glycyl lysine isopeptide (Lys-Gly) (interchain with G-Cter in SUMO2); alternate cross-link involves residue lysine 15. Phosphoserine occurs at positions 25, 32, and 39. Serine 44 carries the post-translational modification Phosphoserine; by RPS6KA1. The tract at residues 84-120 (EKATMQNLNDRLASYLDKVRALEEANTELEVKIRDWY) is coil 1A. Residues 84-395 (EKATMQNLND…RLLEGEDAHL (312 aa)) form the IF rod domain. The peptide epitope S1; induces T-cell and keratinocyte proliferation and IFN-gamma production stretch occupies residues 102–116 (VRALEEANTELEVKI). Threonine 110 carries the phosphothreonine modification. Positions 121-138 (QRQAPGPARDYSQYYRTI) are linker 1. The segment at 139–230 (EELQNKILTA…NHEEEMNALR (92 aa)) is coil 1B. The interval 153-167 (ANILLQIDNARLAAD) is peptide epitope S2; induces T-cell proliferation and IFN-gamma production. The linker 12 stretch occupies residues 231-250 (GQVGGEINVEMDAAPGVDLS). Residues 251–392 (RILNEMRDQY…TYRRLLEGED (142 aa)) form a coil 2 region. Lysine 278 is covalently cross-linked (Glycyl lysine isopeptide (Lys-Gly) (interchain with G-Cter in SUMO2)). At threonine 279 the chain carries Phosphothreonine. Phosphoserine is present on serine 323. The interval 332–346 (ENRYCVQLSQIQGLI) is peptide epitope S4; induces T-cell and keratinocyte proliferation and IFN-gamma production. Residues 393-432 (AHLTQYKKEPVTTRQVRTIVEEVQDGKVISSREQVHQTTR) form a tail region. Glycyl lysine isopeptide (Lys-Gly) (interchain with G-Cter in SUMO1); alternate cross-links involve residues lysine 399, lysine 400, and lysine 419. Glycyl lysine isopeptide (Lys-Gly) (interchain with G-Cter in SUMO2); alternate cross-links involve residues lysine 399, lysine 400, and lysine 419.

It belongs to the intermediate filament family. In terms of assembly, heterodimer of a type I and a type II keratin. KRT17 associates with KRT6 isomers (KRT6A or KRT6B). Interacts with TRADD and SFN. Phosphorylation at Ser-44 occurs in a growth- and stress-dependent fashion in skin keratinocytes, it has no effect on filament organization. In terms of tissue distribution, expressed in the outer root sheath and medulla region of hair follicle specifically from eyebrow and beard, digital pulp, nail matrix and nail bed epithelium, mucosal stratified squamous epithelia and in basal cells of oral epithelium, palmoplantar epidermis and sweat and mammary glands. Also expressed in myoepithelium of prostate, basal layer of urinary bladder, cambial cells of sebaceous gland and in exocervix (at protein level).

It localises to the cytoplasm. Its function is as follows. Type I keratin involved in the formation and maintenance of various skin appendages, specifically in determining shape and orientation of hair. Required for the correct growth of hair follicles, in particular for the persistence of the anagen (growth) state. Modulates the function of TNF-alpha in the specific context of hair cycling. Regulates protein synthesis and epithelial cell growth through binding to the adapter protein SFN and by stimulating Akt/mTOR pathway. Involved in tissue repair. May be a marker of basal cell differentiation in complex epithelia and therefore indicative of a certain type of epithelial 'stem cells'. Acts as a promoter of epithelial proliferation by acting a regulator of immune response in skin: promotes Th1/Th17-dominated immune environment contributing to the development of basaloid skin tumors. May act as an autoantigen in the immunopathogenesis of psoriasis, with certain peptide regions being a major target for autoreactive T-cells and hence causing their proliferation. This is Keratin, type I cytoskeletal 17 (KRT17) from Homo sapiens (Human).